A 20-amino-acid polypeptide reads, in one-letter code: DnaJ homolog subfamily C member 1 (20 aa).

At 1–20 (WESGDLELFDLVEEVXLNFY) the chain is on the lumenal side. One can recognise a J domain in the interval 18 to 20 (NFY).

Interacts (via SANT 2 domain) with SERPINA3; the interaction delays the formation of the covalent inhibitory complex SERPINA3-chymotrypsin, but does not alter the catalytic activity of SERPINA3. Interacts (via SANT 2 domain) with ITIH4 (via C-terminus); the interaction protects ITIH4 against in vitro cleavage by kallikrein. Interacts (via J domain) with HSPA5. Interacts (via cytosolic domain) with ribosomes.

It is found in the endoplasmic reticulum membrane. The protein resides in the nucleus membrane. The protein localises to the microsome membrane. This is DnaJ homolog subfamily C member 1 (DNAJC1) from Canis lupus familiaris (Dog).